The chain runs to 1131 residues: Phytochrome (1131 aa).

The interval 1–30 (MASNSRHTQSQSTGSNNRRSSTNTNTTTNK) is disordered. Over residues 9 to 29 (QSQSTGSNNRRSSTNTNTTTN) the composition is skewed to low complexity. In terms of domain architecture, GAF spans 227–406 (DVGLLCDTVV…ALGLQLNMEL (180 aa)). Residue cysteine 332 participates in phytochromobilin binding. PAS domains lie at 621–692 (VASE…LRGE) and 755–826 (DYRS…TIVL). The 221-residue stretch at 903–1123 (YIRQEIKNPL…LVNVEFPMAQ (221 aa)) folds into the Histidine kinase domain.

It belongs to the phytochrome family. In terms of assembly, homodimer. Post-translationally, contains one covalently linked phytochromobilin chromophore.

In terms of biological role, regulatory photoreceptor which exists in two forms that are reversibly interconvertible by light: the Pr form that absorbs maximally in the red region of the spectrum and the Pfr form that absorbs maximally in the far-red region. Photoconversion of Pr to Pfr induces an array of morphogenic responses, whereas reconversion of Pfr to Pr cancels the induction of those responses. Pfr controls the expression of a number of nuclear genes including those encoding the small subunit of ribulose-bisphosphate carboxylase, chlorophyll A/B binding protein, protochlorophyllide reductase, rRNA, etc. It also controls the expression of its own gene(s) in a negative feedback fashion. This Pinus sylvestris (Scotch pine) protein is Phytochrome.